Here is a 542-residue protein sequence, read N- to C-terminus: Carboxypeptidase Y homolog A (542 aa).

A signal peptide spans 1–17 (MRVLPATLLVGAASAAV). Residues 18-123 (PPLQQVLGRP…KLEAYDLRIK (106 aa)) constitute a propeptide that is removed on maturation. 5 disulfide bridges follow: C178–C418, C312–C326, C336–C359, C343–C352, and C381–C388. A glycan (N-linked (GlcNAc...) asparagine) is linked at N209. S265 is a catalytic residue. D457 is an active-site residue. A glycan (N-linked (GlcNAc...) asparagine) is linked at N508. Residue H519 is part of the active site.

It belongs to the peptidase S10 family.

It localises to the vacuole. The enzyme catalyses Release of a C-terminal amino acid with broad specificity.. Vacuolar carboxypeptidase involved in degradation of small peptides. Digests preferentially peptides containing an aliphatic or hydrophobic residue in P1' position, as well as methionine, leucine or phenylalanine in P1 position of ester substrate. This Aspergillus oryzae (strain ATCC 42149 / RIB 40) (Yellow koji mold) protein is Carboxypeptidase Y homolog A (cpyA).